The following is a 328-amino-acid chain: GMP reductase (328 aa).

Cysteine 176 functions as the Thioimidate intermediate in the catalytic mechanism. Residue 205 to 228 participates in NADP(+) binding; the sequence is IIADGGIRTHGDVAKSIRFGATMV.

It belongs to the IMPDH/GMPR family. GuaC type 2 subfamily.

The catalysed reaction is IMP + NH4(+) + NADP(+) = GMP + NADPH + 2 H(+). Its function is as follows. Catalyzes the irreversible NADPH-dependent deamination of GMP to IMP. It functions in the conversion of nucleobase, nucleoside and nucleotide derivatives of G to A nucleotides, and in maintaining the intracellular balance of A and G nucleotides. The sequence is that of GMP reductase from Bacillus cereus (strain ATCC 14579 / DSM 31 / CCUG 7414 / JCM 2152 / NBRC 15305 / NCIMB 9373 / NCTC 2599 / NRRL B-3711).